The following is a 60-amino-acid chain: DIEDFYTSETCPYKNDSQLAWDTCSGGTGNCGTVCCGQCFSFPVSQSCAGMADSNDCPNA.

Cystine bridges form between Cys-11/Cys-39, Cys-24/Cys-35, Cys-31/Cys-57, and Cys-36/Cys-48.

It is found in the secreted. In terms of biological role, mating ciliate pheromones (or gamones) are diffusible extracellular communication signals that distinguish different intraspecific classes of cells commonly referred to as 'mating types'. They prepare the latter for conjugation by changing their cell surface properties. This chain is Mating pheromone En-2, found in Euplotes nobilii (Ciliate).